We begin with the raw amino-acid sequence, 240 residues long: Ribonuclease HII (240 aa).

The RNase H type-2 domain occupies 27-226 (GPVAGVDEAG…REARSLRLED (200 aa)). A divalent metal cation is bound by residues D33, E34, and D127.

Belongs to the RNase HII family. Requires Mn(2+) as cofactor. The cofactor is Mg(2+).

It localises to the cytoplasm. It catalyses the reaction Endonucleolytic cleavage to 5'-phosphomonoester.. Its function is as follows. Endonuclease that specifically degrades the RNA of RNA-DNA hybrids. The protein is Ribonuclease HII of Frankia casuarinae (strain DSM 45818 / CECT 9043 / HFP020203 / CcI3).